A 57-amino-acid polypeptide reads, in one-letter code: Large ribosomal subunit protein bL33 (57 aa).

This sequence belongs to the bacterial ribosomal protein bL33 family.

This Shewanella halifaxensis (strain HAW-EB4) protein is Large ribosomal subunit protein bL33.